The sequence spans 248 residues: Large ribosomal subunit protein uL4 (248 aa).

Positions 45-105 are disordered; sequence PYGADPYAGM…KDQSKSVNTK (61 aa). Residues 92–105 show a composition bias toward basic and acidic residues; the sequence is PKAEKDQSKSVNTK.

It belongs to the universal ribosomal protein uL4 family. Part of the 50S ribosomal subunit.

Its function is as follows. One of the primary rRNA binding proteins, this protein initially binds near the 5'-end of the 23S rRNA. It is important during the early stages of 50S assembly. It makes multiple contacts with different domains of the 23S rRNA in the assembled 50S subunit and ribosome. Forms part of the polypeptide exit tunnel. This chain is Large ribosomal subunit protein uL4, found in Haloquadratum walsbyi (strain DSM 16790 / HBSQ001).